A 418-amino-acid polypeptide reads, in one-letter code: Histidine--tRNA ligase (418 aa).

Belongs to the class-II aminoacyl-tRNA synthetase family.

It is found in the cytoplasm. The catalysed reaction is tRNA(His) + L-histidine + ATP = L-histidyl-tRNA(His) + AMP + diphosphate + H(+). The polypeptide is Histidine--tRNA ligase (Methanococcus maripaludis (strain C6 / ATCC BAA-1332)).